The following is a 646-amino-acid chain: Rho guanine nucleotide exchange factor 7 (646 aa).

The 60-residue stretch at 6–65 (NSQLVVRAKFNFQQTNEDELSFSKGDVIHVTRVEEGGWWEGTHNGRTGWFPSNYVREIKP) folds into the SH3 domain. Serine 7, serine 71, and serine 79 each carry phosphoserine. A DH domain is found at 93-273 (YYNVVLQNIL…KNLSAQCQEV (181 aa)). The 106-residue stretch at 295–400 (DIKTLGSVTY…WVEHLQRQTK (106 aa)) folds into the PH domain. A Phosphoserine modification is found at serine 340. Disordered regions lie at residues 402–464 (TSVS…GPLE) and 500–520 (KTMK…DEEF). The segment covering 415–428 (PSHTLPSHPLTPSS) has biased composition (polar residues). The span at 500-512 (KTMKKLLPKRKPE) shows a compositional bias: basic residues. Phosphoserine is present on residues serine 516 and serine 560.

In terms of assembly, interacts with SCRIB; interaction is direct and may play a role in regulation of apoptosis. Interacts with PAK kinases through the SH3 domain. Interacts with GIT1 and probably TGFB1I1. Interacts with ITCH and PARVB. Interacts with FRMPD4 (via N-terminus). Interacts with CaMK1. Interacts with PTK2/FAK1 and RAC1. Interacts with BIN2. Interacts with YWHAZ. Interacts (via PH domain) with NOX1 (via FAD-binding FR-type domain). In terms of processing, phosphorylated on Ser-516 by CaMK1; enhancement of GEF activity and downstream activation of RAC1. Phosphorylated by PTK2/FAK1; this promotes interaction with RAC1.

The protein localises to the cell junction. Its subcellular location is the focal adhesion. It localises to the cell projection. It is found in the ruffle. The protein resides in the cytoplasm. The protein localises to the cell cortex. Its subcellular location is the lamellipodium. In terms of biological role, acts as a RAC1 guanine nucleotide exchange factor (GEF) and can induce membrane ruffling. Functions in cell migration, attachment and cell spreading. Promotes targeting of RAC1 to focal adhesions. May function as a positive regulator of apoptosis. Downstream of NMDA receptors and CaMKK-CaMK1 signaling cascade, promotes the formation of spines and synapses in hippocampal neurons. The chain is Rho guanine nucleotide exchange factor 7 (Arhgef7) from Rattus norvegicus (Rat).